Consider the following 232-residue polypeptide: Large ribosomal subunit protein uL1 (232 aa).

The protein belongs to the universal ribosomal protein uL1 family. In terms of assembly, part of the 50S ribosomal subunit.

Binds directly to 23S rRNA. The L1 stalk is quite mobile in the ribosome, and is involved in E site tRNA release. Its function is as follows. Protein L1 is also a translational repressor protein, it controls the translation of the L11 operon by binding to its mRNA. This is Large ribosomal subunit protein uL1 from Cutibacterium acnes (strain DSM 16379 / KPA171202) (Propionibacterium acnes).